The sequence spans 838 residues: MEDQHSAASELGSSAAPTLPPPPPPPPPPTSPPPSLQQRQQEPTETDDAEDTCSSSSSSSASSECFVSPLEDTSSEDSADTVLPSEPRRDEEEQEEDSPDRYMDADVLQRHLLRQSTILRQVLQEAAPGAAAEAAEAPSVAELSRRLEAALFSPATPPRRQENGTCAPDPRLNFYPVFMLPEALATYLLFFHNQKIPVSCRANRPRADAHWRLPSGTPLPDYPTTDEVYKIFEGLGDEEPACANQDLKERDSVLVELKLDNPRLAVVKQCIAVTHFAYPALALPPKVMSTLMQTLLVRRASPLPDEGETPLEDLLVVSDEQLARWMHTSDPKVLEERRKTVTAACMVTVQLHCMHTFLTSREMVRRLGECLHYMFRQGYVKLASKIANMELSNLVSYLGMLHENRLGQHVLHHTLKHEARRDYVRDTIYLYLVYTWQTAMGVWQQCLEDRNLRALETSLARARQSLWTGFDERTIAQDLAAFLFPTKLVETLQRSLPDFASQSMMHAFRSFVLERSGILPAVCNALPSDFVPTVYRECPPPLWAHCYLLRLANFLMYHCDLAEDTSGEGLFECYCRCNLCAPHRCLATNTALLNEVQAINTFELQRPPKPDGTLPPPFKLTPGLWTSAFLRHFVSEDYHSDRILFYEDVSRPPRVEPSACVITHSAILAQLHDIKKAREEFLLTKGHGVYLDPHTGEELNTAAPSTAHHAAPPEEAHPQQHQHQQQPSHRRRHHRSSYADRVRSELHAYGGATGSSRDPVSGGCSARGTHSRDAARRRGSQQRDQRQLRRQFAQYPRGTGGGGGTGHTDEAIQALLHQQQQQQEHQPAQELRRPQRGS.

Residues 1-102 form a disordered region; it reads MEDQHSAASE…EQEEDSPDRY (102 aa). Over residues 18–35 the composition is skewed to pro residues; it reads TLPPPPPPPPPPTSPPPS. Low complexity predominate over residues 52 to 65; that stretch reads TCSSSSSSSASSEC. The tract at residues 291 to 353 is binding to host EIF4G; sequence LMQTLLVRRA…ACMVTVQLHC (63 aa). The region spanning 356 to 474 is the RRM domain; it reads TFLTSREMVR…SLWTGFDERT (119 aa). Phosphotyrosine; by host is present on residues Y373 and Y690. A disordered region spans residues 693 to 838; that stretch reads PHTGEELNTA…QELRRPQRGS (146 aa). Positions 701-710 are enriched in low complexity; sequence TAAPSTAHHA. 2 stretches are compositionally biased toward basic and acidic residues: residues 737 to 746 and 770 to 787; these read SYADRVRSEL and HSRD…DQRQ. A compositionally biased stretch (low complexity) spans 813-829; it reads QALLHQQQQQQEHQPAQ.

Belongs to the adenoviridae shutoff protein family. In terms of assembly, monomer. Interacts with hexon protein; this interaction allows chaperoning and trimerization of hexon proteins. Interacts (via N-terminus) with host initiation factor EIF4G (via C-terminus). Interacts (via RRM domain) with viral mRNAs that contain the tripartite leader; this interaction allows ribosome shunting and expression of viral late mRNAs. In terms of processing, might be cleaved by the viral protease. Phosphorylated. Tyrosine phosphorylation enhances preferential binding to tripartite leader mRNAs and allows ribosome shunting. Post-translationally, methylated. Asymmetric dimethylation by host PRMT1 of the Arg/Gly-rich region may regulate shutoff protein binding to hexon and promote the capsid assembly in the nucleus.

Its subcellular location is the host cytoplasm. Protein that inhibits host translation while promoting late viral translation by ribosome shunting. Blocks host cap-dependent translation by binding to eIF4G, displacing MKNK1 from cap initiation complexes and preventing EIF4E phosphorylation. Binds to the tripartite leader sequence of viral late mRNAs and recruits host eIF4G, PABPC1/poly-A binding protein and 40S ribosomes subunits on viral mRNAs, allowing ribosome shunting and efficient translation of late viral mRNAs even though conventional translation via ribosome scanning from the cap has been shut off in the host cell. During assembly, acts as a chaperone protein that helps hexon proteins assembly into trimers. The chain is Shutoff protein from Porcine adenovirus A serotype 3 (PAdV-3).